The chain runs to 468 residues: Pancreatic lipase-related protein 2 (468 aa).

A signal peptide spans M1–G16. The cysteines at positions 20 and 26 are disulfide-linked. The tract at residues V92 to L104 is required for galactolipase activity. C108 and C119 form a disulfide bridge. Residue S170 is the Nucleophile of the active site. D194 serves as the catalytic Charge relay system. Positions 205, 208, 210, and 213 each coordinate Ca(2+). C255 and C279 form a disulfide bridge. Positions Q256–A278 are required for galactolipase activity. H281 acts as the Charge relay system in catalysis. 2 disulfide bridges follow: C303–C314 and C317–C322. N-linked (GlcNAc...) asparagine glycans are attached at residues N352 and N427. Positions W356–C468 constitute a PLAT domain. C452 and C468 are oxidised to a cystine.

This sequence belongs to the AB hydrolase superfamily. Lipase family. As to expression, expressed in pancreatic acinar cells (at protein level).

The protein localises to the secreted. Its subcellular location is the zymogen granule membrane. The protein resides in the cell projection. It is found in the neuron projection. The catalysed reaction is a triacylglycerol + H2O = a diacylglycerol + a fatty acid + H(+). It catalyses the reaction a 1,2-diacyl-3-O-(beta-D-galactosyl)-sn-glycerol + 2 H2O = 3-beta-D-galactosyl-sn-glycerol + 2 a fatty acid + 2 H(+). It carries out the reaction 1,2,3-tri-(9Z-octadecenoyl)-glycerol + H2O = di-(9Z)-octadecenoylglycerol + (9Z)-octadecenoate + H(+). The enzyme catalyses di-(9Z)-octadecenoylglycerol + H2O = (9Z-octadecenoyl)-glycerol + (9Z)-octadecenoate + H(+). The catalysed reaction is (9Z-octadecenoyl)-glycerol + H2O = glycerol + (9Z)-octadecenoate + H(+). It catalyses the reaction 1-(9Z-octadecenoyl)-glycerol + H2O = glycerol + (9Z)-octadecenoate + H(+). It carries out the reaction 1,2,3-tripropanoylglycerol + H2O = dipropanoylglycerol + propanoate + H(+). The enzyme catalyses 1,2,3-tributanoylglycerol + H2O = dibutanoylglycerol + butanoate + H(+). The catalysed reaction is 1,2,3-trioctanoylglycerol + H2O = dioctanoylglycerol + octanoate + H(+). It catalyses the reaction 1,2-didecanoylglycerol + H2O = decanoylglycerol + decanoate + H(+). It carries out the reaction long chain 1,2-diacyl-3-O-beta-D-galactosyl-sn-glycerol + H2O = long chain acyl-3-O-beta-D-galactosyl-sn-glycerol + a fatty acid + H(+). The enzyme catalyses 1,2-dioctanoyl-3-O-beta-D-galactosyl-sn-glycerol + H2O = octanoyl-3-(beta-D-galactosyl)-sn-glycerol + octanoate + H(+). The catalysed reaction is 1,2-didodecanoyl-3-beta-D-galactosyl-sn-glycerol + H2O = dodecanoyl-3-beta-D-galactosyl-sn-glycerol + dodecanoate + H(+). It catalyses the reaction 1-beta-D-galactosyl-2,3-didodecanoyl-sn-glycerol + H2O = 1-beta-D-galactosyl-dodecanoyl-sn-glycerol + dodecanoate + H(+). It carries out the reaction a 1,2-diacyl-3-O-[alpha-D-galactosyl-(1-&gt;6)-beta-D-galactosyl]-sn-glycerol + H2O = acyl-3-O-[alpha-D-galactosyl-(1-&gt;6)-beta-D-galactosyl]-sn-glycerol + a fatty acid + H(+). The enzyme catalyses long chain 1,2-diacyl-3-O-[alpha-D-galactosyl-(1-&gt;6)-beta-D-galactosyl]-sn-glycerol + H2O = long chain acyl-3-O-[alpha-D-galactosyl-(1-&gt;6)-beta-D-galactosyl]-sn-glycerol + a fatty acid + H(+). The catalysed reaction is 1,2-dioctanoyl-3-O-[alpha-D-galactosyl-(1-&gt;6)-beta-D-galactosyl]-sn-glycerol + H2O = octanoyl-3-O-[alpha-D-galactosyl-(1-&gt;6)-beta-D-galactosyl]-sn-glycerol + octanoate + H(+). It catalyses the reaction 1,2-didodecanoyl-3-O-[alpha-D-galactosyl-(1-&gt;6)-beta-D-galactosyl]-sn-glycerol + H2O = dodecanoyl-3-O-[alpha-D-galactosyl-(1-&gt;6)-beta-D-galactosyl]-sn-glycerol + dodecanoate + H(+). It carries out the reaction a 1,2-diacyl-sn-glycero-3-phosphocholine + H2O = a monoacyl-sn-glycero-3-phosphocholine + a fatty acid + H(+). It functions in the pathway glycerolipid metabolism; triacylglycerol degradation. Its pathway is glycolipid metabolism. With respect to regulation, CLPS stimulates triacylglycerol lipase activity. Triacylglycerol lipase activity is not inhibited by increasing bile salt concentration. Its function is as follows. Lipase that primarily hydrolyzes triglycerides and galactosylglycerides. In neonates, may play a major role in pancreatic digestion of dietary fats such as milk fat globules enriched in long-chain triglycerides. Hydrolyzes short-, medium- and long-chain fatty acyls in triglycerides without apparent positional specificity. Can completely deacylate triacylglycerols. When the liver matures and bile salt synthesis increases, likely functions mainly as a galactolipase and monoacylglycerol lipase. Hydrolyzes monogalactosyldiglycerols (MGDG) and digalactosyldiacylglycerols (DGDG) present in a plant-based diet, releasing long-chain polyunsaturated fatty acids. Hydrolyzes medium- and long-chain fatty acyls in galactolipids. May act together with LIPF to hydrolyze partially digested triglycerides. Hydrolyzes long-chain monoglycerides with high efficiency. In cytotoxic T cells, contributes to perforin-dependent cell lysis, but is unlikely to mediate direct cytotoxicity. Also has low phospholipase activity. In neurons, required for the localization of the phospholipid 1-oleoyl-2-palmitoyl-PC (OPPC) to neurite tips through acyl chain remodeling of membrane phospholipids. The resulting OPPC-rich lipid membrane domain recruits the t-SNARE protein STX4 by selectively interacting with the STX4 transmembrane domain and this promotes surface expression of the dopamine transporter SLC6A3/DAT at neurite tips by facilitating fusion of SLC6A3-containing transport vesicles with the plasma membrane. The polypeptide is Pancreatic lipase-related protein 2 (Rattus norvegicus (Rat)).